A 744-amino-acid polypeptide reads, in one-letter code: Probable methylmalonyl-CoA mutase, mitochondrial (744 aa).

In terms of domain architecture, B12-binding spans 605-737; it reads QPRIMVAKMG…EKLEANLPEA (133 aa). His618 serves as a coordination point for adenosylcob(III)alamin.

This sequence belongs to the methylmalonyl-CoA mutase family. Homodimer. It depends on adenosylcob(III)alamin as a cofactor.

Its subcellular location is the mitochondrion matrix. It catalyses the reaction (R)-methylmalonyl-CoA = succinyl-CoA. Functionally, involved, in man, in the degradation of several amino acids, odd-chain fatty acids and cholesterol via propionyl-CoA to the tricarboxylic acid cycle. MCM has different functions in other species. The protein is Probable methylmalonyl-CoA mutase, mitochondrial (mmcm-1) of Caenorhabditis elegans.